The primary structure comprises 509 residues: Cobyric acid synthase (509 aa).

A GATase cobBQ-type domain is found at 262 to 459; sequence ELKVGIIKLP…IHGIFENDDW (198 aa). Cysteine 343 acts as the Nucleophile in catalysis. Histidine 451 is an active-site residue.

Belongs to the CobB/CobQ family. CobQ subfamily.

Its pathway is cofactor biosynthesis; adenosylcobalamin biosynthesis. Catalyzes amidations at positions B, D, E, and G on adenosylcobyrinic A,C-diamide. NH(2) groups are provided by glutamine, and one molecule of ATP is hydrogenolyzed for each amidation. In Prochlorococcus marinus subsp. pastoris (strain CCMP1986 / NIES-2087 / MED4), this protein is Cobyric acid synthase.